A 549-amino-acid chain; its full sequence is Glucose-6-phosphate isomerase (549 aa).

The Proton donor role is filled by E355. Catalysis depends on residues H386 and K514.

The protein belongs to the GPI family.

It localises to the cytoplasm. The catalysed reaction is alpha-D-glucose 6-phosphate = beta-D-fructose 6-phosphate. The protein operates within carbohydrate biosynthesis; gluconeogenesis. It participates in carbohydrate degradation; glycolysis; D-glyceraldehyde 3-phosphate and glycerone phosphate from D-glucose: step 2/4. In terms of biological role, catalyzes the reversible isomerization of glucose-6-phosphate to fructose-6-phosphate. The polypeptide is Glucose-6-phosphate isomerase (Cronobacter sakazakii (strain ATCC BAA-894) (Enterobacter sakazakii)).